Consider the following 258-residue polypeptide: D-beta-hydroxybutyrate dehydrogenase (258 aa).

Position 8 to 32 (8 to 32 (LVTGSTSGIGLGIAKALAAQGANII)) interacts with NAD(+). Ser-140 is a substrate binding site. The active-site Proton acceptor is the Tyr-153.

It belongs to the short-chain dehydrogenases/reductases (SDR) family.

It catalyses the reaction (R)-3-hydroxybutanoate + NAD(+) = acetoacetate + NADH + H(+). The sequence is that of D-beta-hydroxybutyrate dehydrogenase (hbdH1) from Cupriavidus necator (strain ATCC 17699 / DSM 428 / KCTC 22496 / NCIMB 10442 / H16 / Stanier 337) (Ralstonia eutropha).